The following is a 184-amino-acid chain: Ribosome maturation factor RimP (184 aa).

It belongs to the RimP family.

It is found in the cytoplasm. Functionally, required for maturation of 30S ribosomal subunits. This chain is Ribosome maturation factor RimP, found in Corynebacterium diphtheriae (strain ATCC 700971 / NCTC 13129 / Biotype gravis).